The sequence spans 86 residues: Translation machinery-associated protein 10 (86 aa).

A phosphoserine mark is found at S28 and S79. The segment at 63-86 is disordered; that stretch reads NKTRRGSNSQNNERRLSDLQQYHI.

It belongs to the STF2 family. Associates with ribosomes.

It is found in the cytoplasm. The protein localises to the nucleus. May be involved in inhibition of the reverse ATPase reaction of mitochondrial F(1)F(0)-type ATP synthase. The chain is Translation machinery-associated protein 10 from Saccharomyces cerevisiae (strain ATCC 204508 / S288c) (Baker's yeast).